The following is a 572-amino-acid chain: Arginine--tRNA ligase (572 aa).

The 'HIGH' region signature appears at Pro-122 to His-132.

This sequence belongs to the class-I aminoacyl-tRNA synthetase family. Monomer.

The protein localises to the cytoplasm. The enzyme catalyses tRNA(Arg) + L-arginine + ATP = L-arginyl-tRNA(Arg) + AMP + diphosphate. The sequence is that of Arginine--tRNA ligase from Neisseria meningitidis serogroup B (strain ATCC BAA-335 / MC58).